Consider the following 860-residue polypeptide: MEQVAEGARVTAVPVSAADSTEELAEVEEGVGVVGEDNDAAARGAEAFGDSEEDGEDVFEVEKILDMKTEGGKVLYKVRWKGYTSDDDTWEPEIHLEDCKEVLLEFRKKIAENKAKAVRKDIQRLSLNNDIFEANSDSDQQSETKEDTSPKKKKKKLRQREEKSPDDLKKKKAKAGKLKDKSKPDLESSLESLVFDLRTKKRISEAKEELKESKKPKKDEVKETKELKKVKKGEIRDLKTKTREDPKENRKTKKEKFVESQVESESSVLNDSPFPEDDSEGLHSDSREEKQNTKSARERAGQDMGLEHGFEKPLDSAMSAEEDTDVRGRRKKKTPRKAEDTRENRKLENKNAFLEKKTVPKKQRNQDRSKSAAELEKLMPVSAQTPKGRRLSGEERGLWSTDSAEEDKETKRNESKEKYQKRHDSDKEEKGRKEPKGLKTLKEIRNAFDLFKLTPEEKNDVSENNRKREEIPLDFKTIDDHKTKENKQSLKERRNTRDETDTWAYIAAEGDQEVLDSVCQADENSDGRQQILSLGMDLQLEWMKLEDFQKHLDGKDENFAATDAIPSNVLRDAVKNGDYITVKVALNSNEEYNLDQEDSSGMTLVMLAAAGGQDDLLRLLITKGAKVNGRQKNGTTALIHAAEKNFLTTVAILLEAGAFVNVQQSNGETALMKACKRGNSDIVRLVIECGADCNILSKHQNSALHFAKQSNNVLVYDLLKNHLETLSRVAEETIKDYFEARLALLEPVFPIACHRLCEGPDFSTDFNYKPPQNIPEGSGILLFIFHANFLGKEVIARLCGPCSVQAVVLNDKFQLPVFLDSHFVYSFSPVAGPNKLFIRLTEAPSAKVKLLIGAYRVQLQ.

At methionine 1 the chain carries N-acetylmethionine. Residues serine 51, serine 85, serine 136, and serine 138 each carry the phosphoserine modification. The Chromo domain maps to 59–118 (FEVEKILDMKTEGGKVLYKVRWKGYTSDDDTWEPEIHLEDCKEVLLEFRKKIAENKAKAV). The histone H3K9me3 binding stretch occupies residues 80–87 (WKGYTSDD). The segment covering 129–141 (NDIFEANSDSDQQ) has biased composition (polar residues). A disordered region spans residues 129–191 (NDIFEANSDS…SKPDLESSLE (63 aa)). Threonine 144 carries the phosphothreonine modification. Serine 149 and serine 164 each carry phosphoserine; by CDK1. Composition is skewed to basic and acidic residues over residues 159 to 169 (QREEKSPDDLK) and 177 to 186 (KLKDKSKPDL). Phosphoserine is present on residues serine 188, serine 189, and serine 192. The span at 206 to 249 (AKEELKESKKPKKDEVKETKELKKVKKGEIRDLKTKTREDPKEN) shows a compositional bias: basic and acidic residues. The disordered stretch occupies residues 206–440 (AKEELKESKK…GRKEPKGLKT (235 aa)). The span at 259-268 (ESQVESESSV) shows a compositional bias: low complexity. Phosphoserine is present on residues serine 266, serine 272, and serine 279. Basic and acidic residues predominate over residues 280–314 (EGLHSDSREEKQNTKSARERAGQDMGLEHGFEKPL). Position 319 is a phosphoserine (serine 319). A Phosphothreonine; by CDK1 modification is found at threonine 334. Basic and acidic residues predominate over residues 336 to 377 (RKAEDTRENRKLENKNAFLEKKTVPKKQRNQDRSKSAAELEK). Threonine 385 is modified (phosphothreonine; by CDK1). Phosphoserine occurs at positions 392, 400, and 403. Basic and acidic residues predominate over residues 408-440 (KETKRNESKEKYQKRHDSDKEEKGRKEPKGLKT). The interaction with humanin stretch occupies residues 431-560 (GRKEPKGLKT…HLDGKDENFA (130 aa)). Phosphothreonine is present on threonine 454. The segment at 458-496 (KNDVSENNRKREEIPLDFKTIDDHKTKENKQSLKERRNT) is disordered. ANK repeat units follow at residues 600 to 629 (SGMTLVMLAAAGGQDDLLRLLITKGAKVNG), 633 to 662 (NGTTALIHAAEKNFLTTVAILLEAGAFVNV), 666 to 695 (NGETALMKACKRGNSDIVRLVIECGADCNI), and 699 to 728 (HQNSALHFAKQSNNVLVYDLLKNHLETLSR).

As to quaternary structure, homodimer. Interacts (via chromo domain) with histone H3K9me3. Has the highest affinity for H3K9me3, and lesser affinity for H3K9me2 and H3K9me1. Component of the HUSH complex; at least composed of TASOR, PPHLN1 and MPHOSPH8. Interacts with DNMT3, EHMT1 and SETDB1. Interacts with MORC2; the interaction associateS MORC2 with the HUSH complex which recruits MORC2 to heterochromatic loci. Interacts with ZNF638; leading to recruitment of the HUSH complex to unintegrated retroviral DNA. Interacts with TASOR. Interacts with humanin. Phosphorylated in M (mitotic) phase. Phosphorylation by CDK1 promotes dissociation from chromatin.

The protein resides in the nucleus. Its subcellular location is the chromosome. Its function is as follows. Heterochromatin component that specifically recognizes and binds methylated 'Lys-9' of histone H3 (H3K9me) and promotes recruitment of proteins that mediate epigenetic repression. Mediates recruitment of the HUSH complex to H3K9me3 sites: the HUSH complex is recruited to genomic loci rich in H3K9me3 and is required to maintain transcriptional silencing by promoting recruitment of SETDB1, a histone methyltransferase that mediates further deposition of H3K9me3, as well as MORC2. Binds H3K9me and promotes DNA methylation by recruiting DNMT3A to target CpG sites; these can be situated within the coding region of the gene. Mediates down-regulation of CDH1 expression. Also represses L1 retrotransposons in collaboration with MORC2 and, probably, SETDB1, the silencing is dependent of repressive epigenetic modifications, such as H3K9me3 mark. Silencing events often occur within introns of transcriptionally active genes, and lead to the down-regulation of host gene expression. The HUSH complex is also involved in the silencing of unintegrated retroviral DNA by being recruited by ZNF638: some part of the retroviral DNA formed immediately after infection remains unintegrated in the host genome and is transcriptionally repressed. The chain is M-phase phosphoprotein 8 from Homo sapiens (Human).